The following is a 1788-amino-acid chain: Protein Shroom3 (1788 aa).

Disordered regions lie at residues 1–25 (MMQV…STSD), 146–174 (EVNS…HGRL), 225–263 (KAAG…ESSP), 321–367 (GAKS…KQEG), 382–401 (PDIS…PLRL), 469–488 (NIAS…QADH), 498–548 (TVHA…GNKL), 727–768 (EISP…VTPT), 793–821 (TAEQ…APLT), 876–915 (TGRR…SMNS), 1011–1067 (SRRH…SASN), 1086–1133 (SFKN…PETK), 1171–1263 (KRGK…SEAE), 1303–1324 (DTES…PPSL), 1404–1467 (VPAP…AKSQ), and 1507–1538 (ALKE…KRET). Composition is skewed to polar residues over residues 147–161 (VNSS…SRQP) and 230–240 (HSTNTSSNAAQ). Basic and acidic residues-rich tracts occupy residues 245 to 259 (VHGD…ERSP) and 357 to 366 (SVKEREKKQE). The span at 476 to 488 (NKMDERSNRQADH) shows a compositional bias: basic and acidic residues. Positions 708-811 (VKDAQCKVLE…SEPEKMNEVG (104 aa)) constitute an ASD1 domain. The span at 793–808 (TAEQKKRSYSEPEKMN) shows a compositional bias: basic and acidic residues. Positions 893–903 (QSTYFSGSIMD) are enriched in polar residues. Low complexity predominate over residues 904-915 (NQSMTSTSSMNS). 3 stretches are compositionally biased toward polar residues: residues 1055-1067 (EVGN…SASN), 1100-1124 (ENSS…SISG), and 1211-1263 (TSAQ…SEAE). The span at 1313–1323 (PPSPPPFPPPS) shows a compositional bias: pro residues. Polar residues predominate over residues 1433–1451 (SILQSSEGNFNPSDSQSTL). In terms of domain architecture, ASD2 spans 1467 to 1756 (QELAKEIVTK…QLRCLTESLP (290 aa)). The span at 1529 to 1538 (SEXKEEKRET) shows a compositional bias: basic and acidic residues. Residues 1653 to 1708 (RLARVENALSSLGEDASAEERKTWNEKKKQLCGQHEDARELKENLDRREKLVMDFL) are a coiled coil.

It belongs to the shroom family. As to quaternary structure, interacts with F-actin. Interacts with ROCK1. Expressed in epithelial cells of the cement gland.

It is found in the cell junction. The protein localises to the adherens junction. The protein resides in the cytoplasm. Its subcellular location is the cytoskeleton. It localises to the apical cell membrane. In terms of biological role, controls cell shape changes in the neuroepithelium during neural tube closure. Induces apical constriction in epithelial cells by promoting the apical accumulation of F-actin and myosin II, and probably by bundling stress fibers. Induces apicobasal cell elongation by redistributing gamma-tubulin and directing the assembly of robust apicobasal microtubule arrays. This Xenopus laevis (African clawed frog) protein is Protein Shroom3 (shroom3).